Reading from the N-terminus, the 360-residue chain is Zinc finger protein ztf-2 (360 aa).

Residues 19-41 (LSSPEKEHRRKRRRGEVANPSNT) form a disordered region. 3 C2H2-type zinc fingers span residues 87-109 (RTCSTCGYQGKWVSEMIRHKRVH), 115-138 (FKCRYCSRTSKWKADLIRHVAKTH), and 180-203 (YRCQLCSFEDERVSVLNSHVSHLH). The segment covering 248 to 260 (PLSPCRSESSSDS) has biased composition (low complexity). Residues 248–272 (PLSPCRSESSSDSGIQTDPEEEASI) form a disordered region.

As to expression, expressed in pharyngeal epithelium/arcade, which connects the pharynx to the mouth.

Its function is as follows. Transcription factor. Represses gene expression, probably via binding to DNA consensus sequence 5'-[AT][CT]TTCC[AC][AG]-3' in promoter regions. May play a role in pharynx morphogenesis. This Caenorhabditis elegans protein is Zinc finger protein ztf-2.